A 330-amino-acid polypeptide reads, in one-letter code: Polygalacturonase inhibitor (330 aa).

A signal peptide spans 1 to 24; sequence MELKFSTFLSLTLLFSSVLNPALS. Intrachain disulfides connect cysteine 27/cysteine 57 and cysteine 58/cysteine 65. LRR repeat units lie at residues 69-92, 93-118, 119-141, 142-166, 167-192, 194-215, and 217-237; these read TNRI…LVGD, LPYL…IAKL, KGLK…FLSQ, LKNL…LSEL, PNLG…QFIG, VPDL…FAQM, and FTSI…IFGL. N-linked (GlcNAc...) asparagine glycosylation is found at asparagine 106, asparagine 130, asparagine 144, and asparagine 154. 2 N-linked (GlcNAc...) asparagine glycosylation sites follow: asparagine 238 and asparagine 254. LRR repeat units follow at residues 239–261, 262–285, and 287–309; these read KTTQ…VEFP, TSLT…FTQL, and FQFL…KLQS. N-linked (GlcNAc...) asparagine glycosylation occurs at asparagine 291. 2 disulfide bridges follow: cysteine 298-cysteine 320 and cysteine 322-cysteine 329.

Belongs to the polygalacturonase-inhibiting protein family. Homodimer. N-linked glycosylated. Mostly expressed in fruits, and, to a lower extent, in flowers and leaves.

It is found in the secreted. Its subcellular location is the extracellular space. The protein localises to the apoplast. The protein resides in the cell wall. Its function is as follows. Inhibitor of fungal polygalacturonase. It is an important factor for plant resistance to phytopathogenic fungi. In Pyrus communis (Pear), this protein is Polygalacturonase inhibitor (PGIP).